The chain runs to 292 residues: (S)-phenoxypropionate/alpha-ketoglutarate-dioxygenase (292 aa).

Fe cation contacts are provided by His-108 and Asp-110. Residues Thr-135 and Trp-247 each coordinate 2-oxoglutarate. His-262 is a binding site for Fe cation. Position 273 (Arg-273) interacts with 2-oxoglutarate.

The protein belongs to the TfdA dioxygenase family. Monomer. Fe cation serves as cofactor. Requires L-ascorbate as cofactor.

The catalysed reaction is (S)-2-(4-chloro-2-methylphenoxy)propanoate + 2-oxoglutarate + O2 = 2-methyl-4-chlorophenol + pyruvate + succinate + CO2. It carries out the reaction (S)-(2,4-dichlorophenoxy)propanoate + 2-oxoglutarate + O2 = 2,4-dichlorophenol + pyruvate + succinate + CO2. The protein operates within xenobiotic degradation; 2-(2,4-dichlorophenoxy)propanoate degradation. Inhibited by divalent cations, most significantly by copper and nickel, and by diethylpyrocarbonate (DEPC). Functionally, involved in the degradation of the phenoxypropionate herbicides. Catalyzes the enantiospecific cleavage of the ether bond in the herbicid S-dichlorprop ((S)-2-(2,4-dichlorophenoxy)propionate)(S-2,4-DP) and S-mecoprop ((S)-2-(4-chloro-2-methylphenoxy)propionate)(S-2,4-MCPP). It can also accept (RS)-2-(4-chlorophenoxy)propionate, (RS)-2-(m-chlorophenoxy)propionate and phenoxyacetate derivatives such as 2,4-dichlorophenoxyacetate (2,4-D), however it can only accept 2-oxoglutarate as oxygen acceptor. The polypeptide is (S)-phenoxypropionate/alpha-ketoglutarate-dioxygenase (Delftia acidovorans (Pseudomonas acidovorans)).